Reading from the N-terminus, the 488-residue chain is Germacrene A hydroxylase (488 aa).

Residues 1–6 (MELSFT) lie on the Cytoplasmic side of the membrane. The chain crosses the membrane as a helical; Signal-anchor for type II membrane protein span at residues 7–23 (TSIAVATIVFVLFKLAT). Residues 24-488 (RPKSNKKLLP…KTHLVLVPSF (465 aa)) are Lumenal-facing. 3 N-linked (GlcNAc...) asparagine glycosylation sites follow: Asn255, Asn260, and Asn379. Cys432 contributes to the heme binding site.

This sequence belongs to the cytochrome P450 family. It depends on heme as a cofactor.

The protein resides in the endoplasmic reticulum membrane. It catalyses the reaction (+)-(R)-germacrene A + 3 reduced [NADPH--hemoprotein reductase] + 3 O2 = germacra-1(10),4,11(13)-trien-12-oate + 3 oxidized [NADPH--hemoprotein reductase] + 4 H2O + 4 H(+). It participates in secondary metabolite biosynthesis; terpenoid biosynthesis. In terms of biological role, involved in the biosynthesis of germacrene-derived sesquiterpene lactones. Catalyzes three consecutive oxidations of germacrene A to produce germacrene A acid. Could also catalyze the three-step oxidation of non-natural substrate amorphadiene to artemisinic acid. The chain is Germacrene A hydroxylase from Saussurea costus (Costus).